We begin with the raw amino-acid sequence, 100 residues long: Integration host factor subunit alpha (100 aa).

It belongs to the bacterial histone-like protein family. In terms of assembly, heterodimer of an alpha and a beta chain.

This protein is one of the two subunits of integration host factor, a specific DNA-binding protein that functions in genetic recombination as well as in transcriptional and translational control. The chain is Integration host factor subunit alpha from Alcanivorax borkumensis (strain ATCC 700651 / DSM 11573 / NCIMB 13689 / SK2).